We begin with the raw amino-acid sequence, 381 residues long: Mannitol-1-phosphate 5-dehydrogenase (381 aa).

NAD(+) is bound at residue 3-14 (AVHFGAGNIGRG).

The protein belongs to the mannitol dehydrogenase family.

It catalyses the reaction D-mannitol 1-phosphate + NAD(+) = beta-D-fructose 6-phosphate + NADH + H(+). This Photobacterium profundum (strain SS9) protein is Mannitol-1-phosphate 5-dehydrogenase.